Here is a 301-residue protein sequence, read N- to C-terminus: Peroxisome assembly protein 26 (301 aa).

The Cytoplasmic segment spans residues 1-246; the sequence is MKNDSSTSAA…DAAASHLLSQ (246 aa). The helical; Signal-anchor for type II membrane protein transmembrane segment at 247–263 threads the bilayer; sequence PFKKSLLAALILCLLVL. At 264-301 the chain is on the peroxisomal side; sequence RFDPATPSSLPFLYQLAHLFRRIQKATLSRLYPLALRD.

Belongs to the peroxin-26 family. In terms of assembly, interacts directly with PEX6 via its cytoplasmic domain. Interacts indirectly with PEX1, via its interaction with PEX6.

It is found in the peroxisome membrane. Functionally, peroxisomal docking factor that anchors PEX1 and PEX6 to peroxisome membranes. It is therefore required for the formation of the PEX1-PEX6 AAA ATPase complex, a complex that mediates the extraction of the PEX5 receptor from peroxisomal membrane. The polypeptide is Peroxisome assembly protein 26 (Pex26) (Cricetulus griseus (Chinese hamster)).